Here is a 79-residue protein sequence, read N- to C-terminus: Small ribosomal subunit protein bS18 (79 aa).

Belongs to the bacterial ribosomal protein bS18 family. In terms of assembly, part of the 30S ribosomal subunit. Forms a tight heterodimer with protein bS6.

Binds as a heterodimer with protein bS6 to the central domain of the 16S rRNA, where it helps stabilize the platform of the 30S subunit. This chain is Small ribosomal subunit protein bS18, found in Blochmanniella pennsylvanica (strain BPEN).